The chain runs to 783 residues: BMP/retinoic acid-inducible neural-specific protein 2 (783 aa).

The N-terminal stretch at 1–33 is a signal peptide; sequence MRWQCGTRFRGLRPAVAPWTALLALGLPGWVLA. The MACPF domain maps to 85-281; sequence RYRIYREFAR…FVAAALSYIT (197 aa). N-linked (GlcNAc...) asparagine glycosylation is found at Asn-185, Asn-354, Asn-473, Asn-579, Asn-626, and Asn-658.

Belongs to the BRINP family.

The protein resides in the secreted. Functionally, inhibits neuronal cell proliferation by negative regulation of the cell cycle transition. The sequence is that of BMP/retinoic acid-inducible neural-specific protein 2 (BRINP2) from Homo sapiens (Human).